A 152-amino-acid chain; its full sequence is Transcriptional regulator MraZ (152 aa).

2 SpoVT-AbrB domains span residues 5-52 (ANAI…PLNE) and 81-124 (ATES…DEDM).

It belongs to the MraZ family. As to quaternary structure, forms oligomers.

It localises to the cytoplasm. Its subcellular location is the nucleoid. This Psychromonas ingrahamii (strain DSM 17664 / CCUG 51855 / 37) protein is Transcriptional regulator MraZ.